Reading from the N-terminus, the 216-residue chain is Thymidylate kinase (216 aa).

10–17 (GPDGAGKS) is a binding site for ATP.

The protein belongs to the thymidylate kinase family.

The enzyme catalyses dTMP + ATP = dTDP + ADP. Functionally, phosphorylation of dTMP to form dTDP in both de novo and salvage pathways of dTTP synthesis. The protein is Thymidylate kinase of Lactobacillus acidophilus (strain ATCC 700396 / NCK56 / N2 / NCFM).